The primary structure comprises 265 residues: Aliphatic sulfonates import ATP-binding protein SsuB 1 (265 aa).

The ABC transporter domain maps to Phe-31–Leu-255. Gly-63–Ser-70 is an ATP binding site.

The protein belongs to the ABC transporter superfamily. Aliphatic sulfonates importer (TC 3.A.1.17.2) family. As to quaternary structure, the complex is composed of two ATP-binding proteins (SsuB), two transmembrane proteins (SsuC) and a solute-binding protein (SsuA).

It localises to the cell inner membrane. The catalysed reaction is ATP + H2O + aliphatic sulfonate-[sulfonate-binding protein]Side 1 = ADP + phosphate + aliphatic sulfonateSide 2 + [sulfonate-binding protein]Side 1.. In terms of biological role, part of the ABC transporter complex SsuABC involved in aliphatic sulfonates import. Responsible for energy coupling to the transport system. This chain is Aliphatic sulfonates import ATP-binding protein SsuB 1, found in Mesorhizobium japonicum (strain LMG 29417 / CECT 9101 / MAFF 303099) (Mesorhizobium loti (strain MAFF 303099)).